The chain runs to 334 residues: Holliday junction branch migration complex subunit RuvB (334 aa).

The interval 1–181 is large ATPase domain (RuvB-L); the sequence is MTRILDNDLM…FGITGHMEYY (181 aa). ATP is bound by residues L20, R21, G62, K65, T66, T67, 128-130, R171, Y181, and R218; that span reads EDF. T66 serves as a coordination point for Mg(2+). Residues 182–252 form a small ATPAse domain (RuvB-S) region; that stretch reads QVDDLTEIVE…MTDKALEMLD (71 aa). Positions 255–334 are head domain (RuvB-H); sequence HEGLDYVDQK…LKYPLDTKTE (80 aa). R291, R310, R312, and R315 together coordinate DNA.

Belongs to the RuvB family. In terms of assembly, homohexamer. Forms an RuvA(8)-RuvB(12)-Holliday junction (HJ) complex. HJ DNA is sandwiched between 2 RuvA tetramers; dsDNA enters through RuvA and exits via RuvB. An RuvB hexamer assembles on each DNA strand where it exits the tetramer. Each RuvB hexamer is contacted by two RuvA subunits (via domain III) on 2 adjacent RuvB subunits; this complex drives branch migration. In the full resolvosome a probable DNA-RuvA(4)-RuvB(12)-RuvC(2) complex forms which resolves the HJ.

It localises to the cytoplasm. The enzyme catalyses ATP + H2O = ADP + phosphate + H(+). The RuvA-RuvB-RuvC complex processes Holliday junction (HJ) DNA during genetic recombination and DNA repair, while the RuvA-RuvB complex plays an important role in the rescue of blocked DNA replication forks via replication fork reversal (RFR). RuvA specifically binds to HJ cruciform DNA, conferring on it an open structure. The RuvB hexamer acts as an ATP-dependent pump, pulling dsDNA into and through the RuvAB complex. RuvB forms 2 homohexamers on either side of HJ DNA bound by 1 or 2 RuvA tetramers; 4 subunits per hexamer contact DNA at a time. Coordinated motions by a converter formed by DNA-disengaged RuvB subunits stimulates ATP hydrolysis and nucleotide exchange. Immobilization of the converter enables RuvB to convert the ATP-contained energy into a lever motion, pulling 2 nucleotides of DNA out of the RuvA tetramer per ATP hydrolyzed, thus driving DNA branch migration. The RuvB motors rotate together with the DNA substrate, which together with the progressing nucleotide cycle form the mechanistic basis for DNA recombination by continuous HJ branch migration. Branch migration allows RuvC to scan DNA until it finds its consensus sequence, where it cleaves and resolves cruciform DNA. The chain is Holliday junction branch migration complex subunit RuvB from Streptococcus uberis (strain ATCC BAA-854 / 0140J).